The sequence spans 164 residues: DNA-binding protein inhibitor ID-1 (164 aa).

The bHLH domain maps to 46-98; it reads LPALLDEQQVNVLLYDMNGCYSRLKELVPTLPQNRKVSKVEILQHVIDYIRDL. The Nuclear export signal motif lies at 91-104; that stretch reads VIDYIRDLQLELNS.

In terms of assembly, heterodimer with other HLH proteins. Interacts with COPS5, IFI204, GATA4, NKX2-5, CLOCK and BMAL1. Isoform Short can form homodimers. Phosphorylated in vitro by PKA and PKC.

It localises to the cytoplasm. The protein resides in the nucleus. Transcriptional regulator (lacking a basic DNA binding domain) which negatively regulates the basic helix-loop-helix (bHLH) transcription factors by forming heterodimers and inhibiting their DNA binding and transcriptional activity. Implicated in regulating a variety of cellular processes, including cellular growth, senescence, differentiation, apoptosis, angiogenesis, and neoplastic transformation. Inhibits skeletal muscle and cardiac myocyte differentiation. Regulates the circadian clock by repressing the transcriptional activator activity of the CLOCK-BMAL1 heterodimer. In Rattus norvegicus (Rat), this protein is DNA-binding protein inhibitor ID-1 (Id1).